Here is a 183-residue protein sequence, read N- to C-terminus: Dual-action ribosomal maturation protein DarP (183 aa).

The tract at residues 1 to 21 (MKQKPEDWLNDVPDNQEDDED) is disordered.

This sequence belongs to the DarP family.

It is found in the cytoplasm. Functionally, member of a network of 50S ribosomal subunit biogenesis factors which assembles along the 30S-50S interface, preventing incorrect 23S rRNA structures from forming. Promotes peptidyl transferase center (PTC) maturation. The sequence is that of Dual-action ribosomal maturation protein DarP from Pectobacterium atrosepticum (strain SCRI 1043 / ATCC BAA-672) (Erwinia carotovora subsp. atroseptica).